Reading from the N-terminus, the 485-residue chain is NADH-quinone oxidoreductase subunit N (485 aa).

14 helical membrane passes run 8-28, 35-55, 71-91, 105-125, 127-147, 159-179, 203-223, 235-255, 271-291, 297-317, 326-346, 373-393, 408-430, and 455-475; these read LIAL…MLSI, FLNA…LWFV, GFAM…CTFA, FYLL…ANHL, SLFL…GYAF, YTIL…LVYA, LLAG…LVPF, PAPV…GVVM, VVLA…ALSQ, LLGY…IALQ, VGVY…VVSL, AAVM…LGFI, WWLV…RVAV, and IVVL…QPLI.

The protein belongs to the complex I subunit 2 family. As to quaternary structure, NDH-1 is composed of 13 different subunits. Subunits NuoA, H, J, K, L, M, N constitute the membrane sector of the complex.

The protein resides in the cell inner membrane. It catalyses the reaction a quinone + NADH + 5 H(+)(in) = a quinol + NAD(+) + 4 H(+)(out). Functionally, NDH-1 shuttles electrons from NADH, via FMN and iron-sulfur (Fe-S) centers, to quinones in the respiratory chain. The immediate electron acceptor for the enzyme in this species is believed to be ubiquinone. Couples the redox reaction to proton translocation (for every two electrons transferred, four hydrogen ions are translocated across the cytoplasmic membrane), and thus conserves the redox energy in a proton gradient. In Shigella sonnei (strain Ss046), this protein is NADH-quinone oxidoreductase subunit N.